A 193-amino-acid chain; its full sequence is NAD(P)H-quinone oxidoreductase subunit J (193 aa).

The disordered stretch occupies residues 1–21; it reads MSDSAPTNPTPTNPAPEESAS.

The protein belongs to the complex I 30 kDa subunit family. In terms of assembly, NDH-1 can be composed of about 15 different subunits; different subcomplexes with different compositions have been identified which probably have different functions.

The protein localises to the cellular thylakoid membrane. The catalysed reaction is a plastoquinone + NADH + (n+1) H(+)(in) = a plastoquinol + NAD(+) + n H(+)(out). It carries out the reaction a plastoquinone + NADPH + (n+1) H(+)(in) = a plastoquinol + NADP(+) + n H(+)(out). Its function is as follows. NDH-1 shuttles electrons from an unknown electron donor, via FMN and iron-sulfur (Fe-S) centers, to quinones in the respiratory and/or the photosynthetic chain. The immediate electron acceptor for the enzyme in this species is believed to be plastoquinone. Couples the redox reaction to proton translocation, and thus conserves the redox energy in a proton gradient. Cyanobacterial NDH-1 also plays a role in inorganic carbon-concentration. The protein is NAD(P)H-quinone oxidoreductase subunit J of Synechococcus sp. (strain CC9902).